The chain runs to 406 residues: Trk system potassium uptake protein trkA homolog 1 (406 aa).

Residues 1–124 (MKAVIIGAGE…RAQVGVDLMI (124 aa)) enclose the RCK N-terminal 1 domain. NAD(+) contacts are provided by residues 7–11 (GAGEV), Asp29, 70–71 (TG), and Arg101. The region spanning 144-225 (IDAEMFAEGK…MEDLESVFGS (82 aa)) is the RCK C-terminal domain. Residues 230–348 (RTRILLIGCG…FEMVGIDMAV (119 aa)) enclose the RCK N-terminal 2 domain. 232 to 262 (RILLIGCGIVGMYLAKLIDKEENADLRIIEH) serves as a coordination point for NAD(+).

Part of a potassium transport system. The sequence is that of Trk system potassium uptake protein trkA homolog 1 (trkA1) from Methanosarcina mazei (Methanosarcina frisia).